We begin with the raw amino-acid sequence, 120 residues long: uncharacterized protein (120 aa).

This sequence to E.coli YiaW.

This is an uncharacterized protein from Escherichia coli (strain K12).